The chain runs to 1901 residues: Protein TIC 214 (1901 aa).

The next 6 helical transmembrane spans lie at 18–38 (IINS…FSIG), 64–84 (FITG…HLAL), 87–107 (PHTI…WNNH), 124–144 (LSIQ…HFIL), 172–192 (VGWL…LVWI), and 221–241 (IFSI…PSPI). 3 disordered regions span residues 248-299 (EASK…EERW), 797-817 (REEQ…ENKR), and 1591-1618 (IQEA…LGPV). Positions 256 to 268 (VESEEERDVEIET) are enriched in acidic residues. The segment covering 1591 to 1611 (IQEAKEPASQGEKERGSDIEN) has biased composition (basic and acidic residues).

This sequence belongs to the TIC214 family. Part of the Tic complex.

Its subcellular location is the plastid. It localises to the chloroplast inner membrane. Involved in protein precursor import into chloroplasts. May be part of an intermediate translocation complex acting as a protein-conducting channel at the inner envelope. The chain is Protein TIC 214 from Nicotiana sylvestris (Wood tobacco).